The sequence spans 596 residues: MTKAYNIIHHKFDVVVVGAGGAGLRSAFGMAKEGLNTACITKLFPTRSHTVAAQGGISAALGNMGEDDWRWHMYDTVKGSDWLGDQDAIEYMCKNAPDAILELEHYGVPFSRTEEGKIYQRPFGGMTTEYGKGKAAQRTCAAADRTGHAILHTLYQQSLKHKVQFFVEYFAIDLLMEDGECRGVVVWNLDDGTLHCFRAHNVVLATGGYGRAYFSATSAHTCTGDGGGMAIRAGLPLQDMEFVQFHPTGIYSAGCLITEGARGEGGYLVNANGERFMERYAPAAKDLASRDVVSRAMTIEIREGRGVGEHKDHVFLHLNHLSPEILHSRLPGISETAKIFAGVDVTKEPIPVLPTVHYNMGGIPTNYHGQVIIKDGTNHNSVVKGLMAIGEAACVSVHGANRLGSNSLLDLVVFGRSSALKAAELISPASPHKPIKEASLEKIINRFDKVRHANGNILVADLRLKMQRTMQSHASVFRTQEVLDEGAGMISEIRNGYKDIKINDKSLIWNSDLVEALELDNLLDQALVTVYSAAARKESRGAHAREDYPDRNDGDWMKHTLSSIDEAGKIVIDYKPVTLTTLTDEISAIPPAKRVY.

FAD contacts are provided by residues glycine 18 to glycine 23, threonine 41 to glycine 56, and aspartate 225. Histidine 49 is subject to Tele-8alpha-FAD histidine. Residues histidine 246 and threonine 258 each contribute to the substrate site. The active-site Proton acceptor is arginine 290. Substrate is bound at residue histidine 357. Glutamate 391 lines the FAD pocket. Arginine 402 contacts substrate. Serine 407 to leucine 408 lines the FAD pocket.

Belongs to the FAD-dependent oxidoreductase 2 family. FRD/SDH subfamily. In terms of assembly, part of an enzyme complex containing four subunits: a flavoprotein, an iron-sulfur, cytochrome b-556, and a hydrophobic anchor protein. Requires FAD as cofactor.

It is found in the cell inner membrane. It catalyses the reaction a quinone + succinate = fumarate + a quinol. It functions in the pathway carbohydrate metabolism; tricarboxylic acid cycle; fumarate from succinate (bacterial route): step 1/1. The sequence is that of Succinate dehydrogenase flavoprotein subunit (sdhA) from Rickettsia felis (strain ATCC VR-1525 / URRWXCal2) (Rickettsia azadi).